Here is a 357-residue protein sequence, read N- to C-terminus: uncharacterized protein (357 aa).

The PNPLA domain occupies 27 to 196; the sequence is LVCEGGGQRG…SDAIPVKEAA (170 aa). The GXGXXG motif lies at 31–36; that stretch reads GGGQRG. Residues 59–63 carry the GXSXG motif; the sequence is GTSAG. The active-site Nucleophile is Ser-61. The Proton acceptor role is filled by Asp-183. Positions 183-185 match the DGA/G motif; that stretch reads DGG.

Its function is as follows. Probable lipid hydrolase. This is an uncharacterized protein from Escherichia coli (strain K12).